Here is a 225-residue protein sequence, read N- to C-terminus: Respiratory nitrate reductase 1 gamma chain (225 aa).

Residue methionine 1 is modified to N-formylmethionine. Over 1–3 (MQF) the chain is Periplasmic. The helical transmembrane segment at 4–29 (LNMFFFDIYPYIAGAVFLIGSWLRYD) threads the bilayer. Over 30–47 (YGQYTWRAASSQMLDRKG) the chain is Cytoplasmic. The helical transmembrane segment at 48 to 70 (MNLASNLFHIGILGIFVGHFFGM) threads the bilayer. Positions 56 and 66 each coordinate heme b. Residues 71 to 82 (LTPHWMYEAWLP) are Periplasmic-facing. Residues 83–112 (IEVKQKMAMFAGGASGVLCLIGGVLLLKRR) traverse the membrane as a helical segment. Over 113 to 124 (LFSPRVRATTTG) the chain is Cytoplasmic. The chain crosses the membrane as a helical span at residues 125–148 (ADILILSLLVIQCALGLLTIPFSA). Topologically, residues 149–182 (QHMDGSEMMKLVGWAQSVVTFHGGASQHLDGVAF) are periplasmic. A helical transmembrane segment spans residues 183–198 (IFRLHLVLGMTLFLLF). Residues histidine 187 and histidine 205 each coordinate heme b. At 199-225 (PFSRLIHIWSVPVEYLTRKYQLVRARH) the chain is on the cytoplasmic side.

As to quaternary structure, dimer of heterotrimers each composed of an alpha, a beta and a gamma chain. Alpha and beta are catalytic chains; gamma chains are involved in binding the enzyme complex to the cytoplasmic membrane. It depends on heme as a cofactor.

The protein localises to the cell inner membrane. It carries out the reaction nitrate + a quinol = a quinone + nitrite + H2O. Functionally, the nitrate reductase enzyme complex allows E.coli to use nitrate as an electron acceptor during anaerobic growth. The gamma chain is a membrane-embedded heme-iron unit resembling cytochrome b, which transfers electrons from quinones to the beta subunit. The chain is Respiratory nitrate reductase 1 gamma chain (narI) from Escherichia coli (strain K12).